Consider the following 355-residue polypeptide: UDP-N-acetylglucosamine--N-acetylmuramyl-(pentapeptide) pyrophosphoryl-undecaprenol N-acetylglucosamine transferase (355 aa).

3 residues coordinate UDP-N-acetyl-alpha-D-glucosamine: Arg-166, Ser-196, and Gln-290.

The protein belongs to the glycosyltransferase 28 family. MurG subfamily.

It localises to the cell membrane. It catalyses the reaction Mur2Ac(oyl-L-Ala-gamma-D-Glu-L-Lys-D-Ala-D-Ala)-di-trans,octa-cis-undecaprenyl diphosphate + UDP-N-acetyl-alpha-D-glucosamine = beta-D-GlcNAc-(1-&gt;4)-Mur2Ac(oyl-L-Ala-gamma-D-Glu-L-Lys-D-Ala-D-Ala)-di-trans,octa-cis-undecaprenyl diphosphate + UDP + H(+). It participates in cell wall biogenesis; peptidoglycan biosynthesis. In terms of biological role, cell wall formation. Catalyzes the transfer of a GlcNAc subunit on undecaprenyl-pyrophosphoryl-MurNAc-pentapeptide (lipid intermediate I) to form undecaprenyl-pyrophosphoryl-MurNAc-(pentapeptide)GlcNAc (lipid intermediate II). The sequence is that of UDP-N-acetylglucosamine--N-acetylmuramyl-(pentapeptide) pyrophosphoryl-undecaprenol N-acetylglucosamine transferase from Staphylococcus haemolyticus (strain JCSC1435).